A 718-amino-acid chain; its full sequence is Polyribonucleotide nucleotidyltransferase (718 aa).

The Mg(2+) site is built by D496 and D502. The KH domain maps to 563–622 (PRLLTIKIDPDMIGLVIGPGGKTIKGITEETGAKIDIEDDGTVTISAVDENKAKRARNIV). Positions 632–700 (GDVYAGRVTR…NKGRINLTRL (69 aa)) constitute an S1 motif domain.

May form homodimers or higher order multimers. Interacts with RNase E (rne). Mg(2+) is required as a cofactor.

The protein resides in the cytoplasm. The catalysed reaction is RNA(n+1) + phosphate = RNA(n) + a ribonucleoside 5'-diphosphate. Involved in mRNA degradation. Catalyzes the phosphorolysis of single-stranded polyribonucleotides processively in the 3'- to 5'-direction. The protein is Polyribonucleotide nucleotidyltransferase of Nostoc sp. (strain PCC 7120 / SAG 25.82 / UTEX 2576).